A 1097-amino-acid polypeptide reads, in one-letter code: Protein toll (1097 aa).

The N-terminal stretch at 1–27 (MSRLKAASELALLVIILQLLQWPGSEA) is a signal peptide. The Extracellular portion of the chain corresponds to 28–807 (SFGRDACSEM…ICPAEKGVFI (780 aa)). 3 disulfides stabilise this stretch: cysteine 34–cysteine 45, cysteine 43–cysteine 56, and cysteine 79–cysteine 107. N-linked (GlcNAc...) asparagine glycans are attached at residues asparagine 80, asparagine 140, and asparagine 175. LRR repeat units follow at residues 175–195 (NLSHLELRANIEEMPSHLFDD), 198–219 (NLESIEFGSNKLRQMPRGIFGK), 222–243 (KLKQLNLWSNQLHNLTKHDFEG), 246–267 (SVLGIDIHDNGIEQLPHDVFAH), 270–291 (NVTDINLSANLFRSLPQGLFDH), 294–314 (HLNEVRLMNNRVPLATLPSRL), 320–340 (ELQILRLRAELQSLPGDLFEH), 343–364 (QITNISLGDNLLKTLPATLLEH), 367–388 (NLLSLDLSNNRLTHLPDSLFAH), 391–412 (NLTDLRLEDNLLTGISGDIFSN), 415–436 (NLVTLVMSRNRLRTIDSRAFVS), 439–460 (GLRHLHLDHNDIDLQQPLLDIM), 474–495 (GLLTLNLRNNSIIFVYNDWKNT), 498–521 (QLRELDLSYNNISSLGYEDLAFLS), and 523–544 (NRLHVNMTHNKIRRIALPEDVH). Asparagine 235 is a glycosylation site (N-linked (GlcNAc...) asparagine). N-linked (GlcNAc...) asparagine glycosylation is found at asparagine 270 and asparagine 275. A glycan (N-linked (GlcNAc...) asparagine) is linked at asparagine 346. N-linked (GlcNAc...) asparagine glycosylation is present at asparagine 391. N-linked (GlcNAc...) asparagine glycosylation is found at asparagine 482, asparagine 508, and asparagine 528. Residues 561–620 (NPLVCDCTILWFIQLVRGVHKPQYSRQFKLRTDRLVCSQPNVLEGTPVRQIEPQTLICPL) enclose the LRRCT 1 domain. Cystine bridges form between cysteine 565–cysteine 597, cysteine 567–cysteine 618, cysteine 631–cysteine 637, and cysteine 635–cysteine 650. An LRRNT domain is found at 622–663 (FSDDPRERKCPRGCNCHVRTYDKALVINCHSGNLTHVPRLPN). N-linked (GlcNAc...) asparagine glycosylation is found at asparagine 654, asparagine 677, asparagine 703, asparagine 715, asparagine 730, and asparagine 738. 3 LRR repeats span residues 669–690 (QLMELHLENNTLLRLPSANTPG), 693–713 (SVTSLHLAGNNLTSIDVDQLP), and 715–738 (NLTHLDISWNHLQMLNATVLGFLN). Residues 751–801 (NPWMCDCTAKPLLLFTQDNFERIGDRNEMMCVNAEMPTRMVELSTNDICPA) form the LRRCT 2 domain. 2 disulfides stabilise this stretch: cysteine 755–cysteine 781 and cysteine 757–cysteine 799. The chain crosses the membrane as a helical span at residues 808-828 (ALAVVIALTGLLAGFTAALYY). The Cytoplasmic portion of the chain corresponds to 829–1097 (KFQTEIKIWL…INTNAKQSDV (269 aa)). The TIR domain maps to 857-993 (KKFDAFISYS…WFWDKLRFAL (137 aa)).

It belongs to the Toll-like receptor family. In the absence of ligand, forms a low-affinity disulfide-linked homodimer. In the presence of ligand, crystal structures show one Tl molecule bound to a spaetzle C-106 homodimer. However, the active complex probably consists of two Tl molecules bound to a spaetzle C-106 homodimer. This is supported by in vitro experiments which also show binding of the spaetzle C-106 dimer to 2 Tl receptors. Ligand binding induces conformational changes in the extracellular domain of Tl. This may enable a secondary homodimerization interface at the C-terminus of the Tl extracellular domain. As to expression, in early embryos, concentrated in the pseudocleavage furrows that form transiently between nuclei before cellularization and in the cleavage furrows during cellularization (at protein level). Later, found on cells in the mesectoderm, stomodeum, proctodeum, anterior and posterior midguts, splanchnopleura, salivary gland placode and adjacent to the segmentally repeated tracheal placodes (at protein level). During and after germ band shortening, localized in a number of cell types, including the salivary gland, foregut, hindgut, Malpighian tubules and epidermis (at protein level). In embryos, high expression in M13 with comparatively low expression in M12.

It is found in the cell membrane. It localises to the cytoplasm. In terms of biological role, receptor for the cleaved activated form of spz, spaetzle C-106. Binding to spaetzle C-106 activates the Toll signaling pathway and induces expression of the antifungal peptide drosomycin. Component of the extracellular signaling pathway that establishes dorsal-ventral polarity in the embryo. Promotes heterophilic cellular adhesion. Involved in synaptic targeting of motoneurons RP5 and V to muscle 12 (M12); functions as a repulsive cue inhibiting motoneuron synapse formation on muscle 13 (M13) to guide RP5 and V to the neighboring M12, where its expression is repressed by tey. May also function in embryonic neuronal survival and the synaptic targeting of SNa motoneurons. The polypeptide is Protein toll (Drosophila melanogaster (Fruit fly)).